The primary structure comprises 43 residues: Delta-actitoxin-Bca1a (43 aa).

Disulfide bonds link Cys1/Cys41, Cys3/Cys31, and Cys24/Cys42.

Its subcellular location is the secreted. The protein localises to the nematocyst. Binds specifically to voltage-gated sodium channels (Nav), thereby delaying their inactivation during signal transduction. Thus it strongly stimulates mammalian cardiac muscle contraction. This Bunodosoma capense (Knobbly sea anemone) protein is Delta-actitoxin-Bca1a.